A 212-amino-acid chain; its full sequence is Large ribosomal subunit protein uL3 (212 aa).

The span at 128-146 shows a compositional bias: basic residues; sequence RHGASRGPMKHGSKYHRRT. The disordered stretch occupies residues 128 to 164; the sequence is RHGASRGPMKHGSKYHRRTGSLGAKGPARVFKGRNLP.

It belongs to the universal ribosomal protein uL3 family. In terms of assembly, part of the 50S ribosomal subunit. Forms a cluster with proteins L14 and L19.

Its function is as follows. One of the primary rRNA binding proteins, it binds directly near the 3'-end of the 23S rRNA, where it nucleates assembly of the 50S subunit. The sequence is that of Large ribosomal subunit protein uL3 from Desulfitobacterium hafniense (strain Y51).